A 293-amino-acid chain; its full sequence is Acetyl-coenzyme A carboxylase carboxyl transferase subunit beta (293 aa).

The 265-residue stretch at 29–293 (LWRKCPRCEG…MGWPPLALDD (265 aa)) folds into the CoA carboxyltransferase N-terminal domain. Residues cysteine 33, cysteine 36, cysteine 52, and cysteine 55 each contribute to the Zn(2+) site. Residues 33 to 55 (CPRCEGVVYRPELDRNMDVCPKC) form a C4-type zinc finger.

The protein belongs to the AccD/PCCB family. Acetyl-CoA carboxylase is a heterohexamer composed of biotin carboxyl carrier protein (AccB), biotin carboxylase (AccC) and two subunits each of ACCase subunit alpha (AccA) and ACCase subunit beta (AccD). The cofactor is Zn(2+).

It localises to the cytoplasm. It catalyses the reaction N(6)-carboxybiotinyl-L-lysyl-[protein] + acetyl-CoA = N(6)-biotinyl-L-lysyl-[protein] + malonyl-CoA. It functions in the pathway lipid metabolism; malonyl-CoA biosynthesis; malonyl-CoA from acetyl-CoA: step 1/1. Component of the acetyl coenzyme A carboxylase (ACC) complex. Biotin carboxylase (BC) catalyzes the carboxylation of biotin on its carrier protein (BCCP) and then the CO(2) group is transferred by the transcarboxylase to acetyl-CoA to form malonyl-CoA. This is Acetyl-coenzyme A carboxylase carboxyl transferase subunit beta from Alcanivorax borkumensis (strain ATCC 700651 / DSM 11573 / NCIMB 13689 / SK2).